A 185-amino-acid chain; its full sequence is Transcriptional repressor NrdR (185 aa).

A disordered region spans residues 1–24 (MRCPFCGGPDTQVKDSRPSEDSSA). The segment at 3 to 34 (CPFCGGPDTQVKDSRPSEDSSAIRRRRVCPDC) is a zinc-finger region. The segment covering 12–24 (QVKDSRPSEDSSA) has biased composition (basic and acidic residues). Residues 49-139 (LVVLKRSGKR…VYKNFREAQD (91 aa)) enclose the ATP-cone domain. A disordered region spans residues 148-185 (GERLDGEGDLPEQGDAVPAPPDEAVAAPRRGRPARKRA). Positions 176 to 185 (RRGRPARKRA) are enriched in basic residues.

The protein belongs to the NrdR family. Zn(2+) is required as a cofactor.

In terms of biological role, negatively regulates transcription of bacterial ribonucleotide reductase nrd genes and operons by binding to NrdR-boxes. This chain is Transcriptional repressor NrdR, found in Methylorubrum extorquens (strain CM4 / NCIMB 13688) (Methylobacterium extorquens).